Consider the following 359-residue polypeptide: Phosphatidylglycerol--prolipoprotein diacylglyceryl transferase (359 aa).

The next 4 membrane-spanning stretches (helical) occupy residues 24–44 (VALR…IVWG), 58–78 (VLDI…LYHV), 98–118 (VWQG…GAWI), and 124–144 (GIPL…AQAI). Position 146 (arginine 146) interacts with a 1,2-diacyl-sn-glycero-3-phospho-(1'-sn-glycerol). 3 consecutive transmembrane segments (helical) span residues 193 to 213 (FVVH…VLLL), 222 to 243 (IGHG…FWIE), and 258 to 278 (VNSF…FAAT). The disordered stretch occupies residues 284 to 359 (PAELRPADGG…IDSKKDDAND (76 aa)). Positions 306-323 (IAQKEPEKNVEDAGKDEG) are enriched in basic and acidic residues. The span at 336–349 (ASTASTGGEAGTKT) shows a compositional bias: low complexity. A compositionally biased stretch (basic and acidic residues) spans 350-359 (IDSKKDDAND).

This sequence belongs to the Lgt family.

Its subcellular location is the cell membrane. It catalyses the reaction L-cysteinyl-[prolipoprotein] + a 1,2-diacyl-sn-glycero-3-phospho-(1'-sn-glycerol) = an S-1,2-diacyl-sn-glyceryl-L-cysteinyl-[prolipoprotein] + sn-glycerol 1-phosphate + H(+). It functions in the pathway protein modification; lipoprotein biosynthesis (diacylglyceryl transfer). Catalyzes the transfer of the diacylglyceryl group from phosphatidylglycerol to the sulfhydryl group of the N-terminal cysteine of a prolipoprotein, the first step in the formation of mature lipoproteins. This Rhodococcus jostii (strain RHA1) protein is Phosphatidylglycerol--prolipoprotein diacylglyceryl transferase.